The sequence spans 639 residues: 1-deoxy-D-xylulose-5-phosphate synthase 1 (639 aa).

Residues His-79 and 120 to 122 each bind thiamine diphosphate; that span reads AHS. Asp-155 contacts Mg(2+). Thiamine diphosphate contacts are provided by residues 156 to 157, Asn-184, Tyr-293, and Glu-373; that span reads GA. Asn-184 contacts Mg(2+).

The protein belongs to the transketolase family. DXPS subfamily. In terms of assembly, homodimer. The cofactor is Mg(2+). Thiamine diphosphate is required as a cofactor.

The enzyme catalyses D-glyceraldehyde 3-phosphate + pyruvate + H(+) = 1-deoxy-D-xylulose 5-phosphate + CO2. Its pathway is metabolic intermediate biosynthesis; 1-deoxy-D-xylulose 5-phosphate biosynthesis; 1-deoxy-D-xylulose 5-phosphate from D-glyceraldehyde 3-phosphate and pyruvate: step 1/1. Functionally, catalyzes the acyloin condensation reaction between C atoms 2 and 3 of pyruvate and glyceraldehyde 3-phosphate to yield 1-deoxy-D-xylulose-5-phosphate (DXP). This is 1-deoxy-D-xylulose-5-phosphate synthase 1 from Jannaschia sp. (strain CCS1).